The following is a 321-amino-acid chain: Dolichyl N-acetyl-alpha-D-glucosaminyl phosphate 3-beta-D-2,3-diacetamido-2,3-dideoxy-beta-D-glucuronosyltransferase (321 aa).

Transmembrane regions (helical) follow at residues 252 to 272 and 290 to 310; these read FGFL…FIYI and LYIA…YGFF.

Belongs to the glycosyltransferase 2 family.

It localises to the cell membrane. The enzyme catalyses an archaeal dolichyl N-acetyl-alpha-D-glucosaminyl phosphate + UDP-2,3-diacetamido-2,3-dideoxy-alpha-D-glucuronate = an archaeal dolichyl 3-O-(2,3-diacetamido-2,3-dideoxy- beta-D-glucuronosyl)-N-acetyl- alpha-D-glucosaminyl phosphate + UDP + H(+). Its pathway is cell surface structure biogenesis; S-layer biogenesis. It functions in the pathway protein modification; protein glycosylation. Involved in the assembly of an N-linked disaccharide that decorates the S-layer glycoprotein and flagellins. AglC catalyzes the transfer of 2,3-diacetamido-2,3-dideoxy-alpha-D-glucuronic acid (Glc-2,3-diNAcA) from uridine 5'-diphospho 2,3-diacetamido-2,3-dideoxy-alpha-D-glucuronic acid (UDP-Glc-2,3-diNAcA) to the AglK product Dol-P-GlcNAc to yield Dol-P-GlcNAc-Glc-2,3-diNAcA. AglC is specific for the monophosphate-linked Dol-P-GlcNAc. This is Dolichyl N-acetyl-alpha-D-glucosaminyl phosphate 3-beta-D-2,3-diacetamido-2,3-dideoxy-beta-D-glucuronosyltransferase from Methanococcus voltae.